A 360-amino-acid polypeptide reads, in one-letter code: Peptide chain release factor 1 (360 aa).

Q236 carries the post-translational modification N5-methylglutamine. The segment at Q288 to I308 is disordered. Positions A293 to I308 are enriched in basic and acidic residues.

The protein belongs to the prokaryotic/mitochondrial release factor family. In terms of processing, methylated by PrmC. Methylation increases the termination efficiency of RF1.

The protein resides in the cytoplasm. Its function is as follows. Peptide chain release factor 1 directs the termination of translation in response to the peptide chain termination codons UAG and UAA. This Streptococcus equi subsp. equi (strain 4047) protein is Peptide chain release factor 1.